The primary structure comprises 227 residues: MYDKLPLELWVKITNYSQEFGLLLTNKNFFELLYLMKFETNIIEYVVENNLLDILRHIIFLKNINHPIIMENIIDIRCLEESLNASCKNGKLEIVKLLVDLGANIFHNENCAMMLASEYGHIEIVEYLVSKGSDVRADNDYAVIYASKNGHLEIVKYLVSQGCDVRSCDSYAVRLASEYGHLEIVKFLVKKGANYRALNHHAVIEASKNKHYEIVEFLMNYSTGITK.

ANK repeat units lie at residues 38 to 66, 78 to 107, 108 to 137, 139 to 167, 168 to 197, and 199 to 227; these read FETN…NINH, CLEE…NIFH, NENC…DVRA, NDYA…DVRS, CDSY…NYRA, and NHHA…GITK.

This Acanthamoeba polyphaga mimivirus (APMV) protein is Putative ankyrin repeat protein L45.